A 2103-amino-acid polypeptide reads, in one-letter code: Zinc finger SWIM domain-containing protein 8 homolog (2103 aa).

The SWIM-type zinc-finger motif lies at 191 to 227 (FNVAVTFDRRRISSCNCTCTSSAYWCSHVVAVCLHRI). Disordered stretches follow at residues 684 to 860 (DGNR…GSTA), 1237 to 1262 (SSNP…GGSG), 1310 to 1399 (SSGS…IPNQ), 1735 to 1772 (MQMF…QVVQ), 1786 to 1864 (QQVQ…GVGV), and 1888 to 1916 (PFMQ…RQPH). Over residues 724 to 740 (SALTESDSQSSFDAVSH) the composition is skewed to polar residues. Low complexity-rich tracts occupy residues 754–789 (AVGV…STSS) and 835–857 (GRVA…VGSG). Residues 1237-1249 (SSNPPVRTRSNQP) show a composition bias toward polar residues. Residues 1320–1351 (GMVPTTNAAGTTGTPSSSSTTVSGSQNPNGNP) show a composition bias toward low complexity. Residues 1352-1377 (SGSGGGGNGGGGNGGGGGGGGGGGGS) are compositionally biased toward gly residues. Residues 1755–1764 (QPPPQQPPNP) are compositionally biased toward pro residues. 2 stretches are compositionally biased toward low complexity: residues 1786 to 1813 (QQVQ…SGFQ) and 1820 to 1835 (AFQA…MQAG). Composition is skewed to pro residues over residues 1836-1859 (PPGP…PNGP) and 1894-1908 (PPQP…PSQP).

This sequence belongs to the ZSWIM8 family. As to quaternary structure, component of the SCF-like E3 ubiquitin-protein ligase complex.

Its pathway is protein modification; protein ubiquitination. Functionally, substrate recognition component of a SCF-like E3 ubiquitin-protein ligase complex that promotes target-directed microRNA degradation (TDMD), a process that mediates degradation of microRNAs (miRNAs). The SCF-like E3 ubiquitin-protein ligase complex acts by catalyzing ubiquitination and subsequent degradation of AGO1, thereby exposing miRNAs for degradation. This Drosophila melanogaster (Fruit fly) protein is Zinc finger SWIM domain-containing protein 8 homolog.